The sequence spans 138 residues: Probable DNA-directed RNA polymerases I, II, and III subunit RPABC2 (138 aa).

2 stretches are compositionally biased toward acidic residues: residues 1-27 (MADDDDYQDMDNDDFVDDNEMEDVIEE) and 35-46 (EEEDDDNNVDEN). A disordered region spans residues 1–46 (MADDDDYQDMDNDDFVDDNEMEDVIEEEQQRPDHEEEDDDNNVDEN).

This sequence belongs to the archaeal Rpo6/eukaryotic RPB6 RNA polymerase subunit family. Component of the RNA polymerase I (Pol I), RNA polymerase II (Pol II) and RNA polymerase III (Pol III) complexes consisting of at least 13, 12 and 17 subunits, respectively.

Its subcellular location is the nucleus. Its function is as follows. DNA-dependent RNA polymerases catalyze the transcription of DNA into RNA using the four ribonucleoside triphosphates as substrates. Common component of RNA polymerases I, II and III which synthesize ribosomal RNA precursors, mRNA precursors and many functional non-coding RNAs, and small RNAs, such as 5S rRNA and tRNAs, respectively. Pol II is the central component of the basal RNA polymerase II transcription machinery. Pols are composed of mobile elements that move relative to each other. In Pol II, RPB6 is part of the clamp element and together with parts of RPB1 and RPB2 forms a pocket to which the RPB4-RPB7 subcomplex binds. The protein is Probable DNA-directed RNA polymerases I, II, and III subunit RPABC2 of Caenorhabditis briggsae.